Reading from the N-terminus, the 211-residue chain is FMN-dependent NADH:quinone oxidoreductase (211 aa).

FMN contacts are provided by residues 17 to 19 (SYS) and 99 to 102 (MWNF).

Belongs to the azoreductase type 1 family. Homodimer. FMN is required as a cofactor.

The enzyme catalyses 2 a quinone + NADH + H(+) = 2 a 1,4-benzosemiquinone + NAD(+). The catalysed reaction is N,N-dimethyl-1,4-phenylenediamine + anthranilate + 2 NAD(+) = 2-(4-dimethylaminophenyl)diazenylbenzoate + 2 NADH + 2 H(+). Quinone reductase that provides resistance to thiol-specific stress caused by electrophilic quinones. Functionally, also exhibits azoreductase activity. Catalyzes the reductive cleavage of the azo bond in aromatic azo compounds to the corresponding amines. The protein is FMN-dependent NADH:quinone oxidoreductase of Exiguobacterium sp. (strain ATCC BAA-1283 / AT1b).